We begin with the raw amino-acid sequence, 83 residues long: Cytochrome b559 subunit alpha (83 aa).

The helical transmembrane segment at 21-35 threads the bilayer; sequence VIHSITIPSLFIAGW. Histidine 23 serves as a coordination point for heme.

The protein belongs to the PsbE/PsbF family. As to quaternary structure, heterodimer of an alpha subunit and a beta subunit. PSII is composed of 1 copy each of membrane proteins PsbA, PsbB, PsbC, PsbD, PsbE, PsbF, PsbH, PsbI, PsbJ, PsbK, PsbL, PsbM, PsbT, PsbX, PsbY, PsbZ, Psb30/Ycf12, at least 3 peripheral proteins of the oxygen-evolving complex and a large number of cofactors. It forms dimeric complexes. Heme b serves as cofactor.

The protein resides in the plastid. The protein localises to the chloroplast thylakoid membrane. In terms of biological role, this b-type cytochrome is tightly associated with the reaction center of photosystem II (PSII). PSII is a light-driven water:plastoquinone oxidoreductase that uses light energy to abstract electrons from H(2)O, generating O(2) and a proton gradient subsequently used for ATP formation. It consists of a core antenna complex that captures photons, and an electron transfer chain that converts photonic excitation into a charge separation. The protein is Cytochrome b559 subunit alpha of Chlorella vulgaris (Green alga).